The chain runs to 640 residues: Epithelial sodium channel subunit beta (640 aa).

Over Met1–Ala50 the chain is Cytoplasmic. Residues Met51–Ile71 form a helical membrane-spanning segment. At Arg72 to Gly532 the chain is on the extracellular side. 9 disulfides stabilise this stretch: Cys98–Cys272, Cys184–Cys189, Cys196–Cys203, Cys249–Cys256, Cys361–Cys448, Cys386–Cys444, Cys390–Cys440, Cys399–Cys426, and Cys401–Cys415. An N-linked (GlcNAc...) asparagine glycan is attached at Asn260. The helical transmembrane segment at Ser533 to Ile553 threads the bilayer. At Lys554–Ile640 the chain is on the cytoplasmic side. The tract at residues Phe590–Ile640 is disordered. The PY motif; recruits WW domain-containing proteins and is thereby required for ubiquitination and inhibition of the channel by NEDD4 and NEDD4L motif lies at Pro616–Tyr620. Over residues Ile631–Ile640 the composition is skewed to acidic residues. Phosphoserine is present on residues Ser633 and Ser635.

It belongs to the amiloride-sensitive sodium channel (TC 1.A.6) family. SCNN1B subfamily. As to quaternary structure, component of the heterotrimeric epithelial sodium channel (ENaC) composed of an alpha/SCNN1A, a beta/SCNN1B and a gamma/SCNN1G subunit. An additional delta/SCNN1D subunit can replace the alpha/SCNN1A subunit to form an alternative channel with specific properties. Interacts with WWP1 (via WW domains). Interacts with WWP2 (via WW domains); inhibits the channel. Interacts with the full-length immature form of PCSK9 (pro-PCSK9); inhibits ENaC by promoting its proteasomal degradation. Interacts (N-glycosylated) with BPIFA1; the interaction is direct and inhibits the proteolytic processing of SCNN1A and SCNN1G and the activation of ENaC. Post-translationally, ubiquitinated. Can be ubiquitinated at multiple sites and undergo monoubiquitination and polyubiquitination. Ubiquitination by NEDD4 or NEDD4L inhibits the ENaC channel through endocytosis, intracellular retention and degradation of its individual subunits. However, some studies could not confirm the ubiquitination of this subunit of the ENaC. Phosphorylated on serine and threonine residues. Aldosterone and insulin increase the basal level of phosphorylation. In terms of processing, N-glycosylated. N-glycosylation is required for interaction with BPIFA1. As to expression, detected in placenta, lung and kidney. Expressed in kidney (at protein level).

It is found in the apical cell membrane. The protein localises to the cytoplasmic vesicle membrane. The catalysed reaction is Na(+)(in) = Na(+)(out). Originally identified and characterized by its inhibition by the diuretic drug amiloride. Its function is as follows. This is one of the three pore-forming subunits of the heterotrimeric epithelial sodium channel (ENaC), a critical regulator of sodium balance and fluid homeostasis. ENaC operates in epithelial tissues, where it mediates the electrodiffusion of sodium ions from extracellular fluid through the apical membrane of cells, with water following osmotically. It plays a key role in maintaining sodium homeostasis through electrogenic sodium reabsorption in the kidneys. Additionally, ENaC is essential for airway surface liquid homeostasis, which is crucial for proper mucus clearance. In Homo sapiens (Human), this protein is Epithelial sodium channel subunit beta.